Reading from the N-terminus, the 105-residue chain is Nitrogenase-stabilizing/protective protein NifW 2 (105 aa).

This sequence belongs to the NifW family.

Functionally, may protect the nitrogenase Fe-Mo protein from oxidative damage. The sequence is that of Nitrogenase-stabilizing/protective protein NifW 2 (nifW2) from Trichormus variabilis (strain ATCC 29413 / PCC 7937) (Anabaena variabilis).